Here is a 284-residue protein sequence, read N- to C-terminus: 4-diphosphocytidyl-2-C-methyl-D-erythritol kinase (284 aa).

Lys14 is an active-site residue. 98-108 contacts ATP; sequence PMGGGLGGGSS. Residue Asp140 is part of the active site.

Belongs to the GHMP kinase family. IspE subfamily.

The catalysed reaction is 4-CDP-2-C-methyl-D-erythritol + ATP = 4-CDP-2-C-methyl-D-erythritol 2-phosphate + ADP + H(+). Its pathway is isoprenoid biosynthesis; isopentenyl diphosphate biosynthesis via DXP pathway; isopentenyl diphosphate from 1-deoxy-D-xylulose 5-phosphate: step 3/6. Catalyzes the phosphorylation of the position 2 hydroxy group of 4-diphosphocytidyl-2C-methyl-D-erythritol. The sequence is that of 4-diphosphocytidyl-2-C-methyl-D-erythritol kinase from Shewanella baltica (strain OS155 / ATCC BAA-1091).